A 177-amino-acid chain; its full sequence is PLAC8-like protein 1 (177 aa).

Belongs to the cornifelin family.

This Mus musculus (Mouse) protein is PLAC8-like protein 1 (Plac8l1).